Reading from the N-terminus, the 164-residue chain is Ribonuclease H (164 aa).

The region spanning 9-150 is the RNase H type-1 domain; that stretch reads DMPRVTIYTD…ADTLANAATD (142 aa). 4 residues coordinate Mg(2+): Asp-18, Glu-56, Asp-78, and Asp-142.

Belongs to the RNase H family. Monomer. Requires Mg(2+) as cofactor.

The protein resides in the cytoplasm. The enzyme catalyses Endonucleolytic cleavage to 5'-phosphomonoester.. Functionally, endonuclease that specifically degrades the RNA of RNA-DNA hybrids. In Chromohalobacter salexigens (strain ATCC BAA-138 / DSM 3043 / CIP 106854 / NCIMB 13768 / 1H11), this protein is Ribonuclease H.